The chain runs to 159 residues: L-alanine exporter AlaE (159 aa).

The next 4 helical transmembrane spans lie at 17-37 (FAMV…VSGM), 48-68 (LSIP…DYLL), 86-106 (MVAY…AVGA), and 110-130 (QIIT…IVYG).

This sequence belongs to the AlaE exporter family.

The protein resides in the cell inner membrane. Exports L-alanine. The protein is L-alanine exporter AlaE of Photobacterium profundum (strain SS9).